A 569-amino-acid polypeptide reads, in one-letter code: Dihydroxy-acid dehydratase (569 aa).

Aspartate 80 is a Mg(2+) binding site. Cysteine 121 contacts [2Fe-2S] cluster. 2 residues coordinate Mg(2+): aspartate 122 and lysine 123. At lysine 123 the chain carries N6-carboxylysine. Cysteine 194 serves as a coordination point for [2Fe-2S] cluster. Glutamate 446 is a Mg(2+) binding site. The active-site Proton acceptor is the serine 472.

The protein belongs to the IlvD/Edd family. As to quaternary structure, homodimer. Requires [2Fe-2S] cluster as cofactor. Mg(2+) is required as a cofactor.

The enzyme catalyses (2R)-2,3-dihydroxy-3-methylbutanoate = 3-methyl-2-oxobutanoate + H2O. It catalyses the reaction (2R,3R)-2,3-dihydroxy-3-methylpentanoate = (S)-3-methyl-2-oxopentanoate + H2O. The protein operates within amino-acid biosynthesis; L-isoleucine biosynthesis; L-isoleucine from 2-oxobutanoate: step 3/4. It participates in amino-acid biosynthesis; L-valine biosynthesis; L-valine from pyruvate: step 3/4. Functions in the biosynthesis of branched-chain amino acids. Catalyzes the dehydration of (2R,3R)-2,3-dihydroxy-3-methylpentanoate (2,3-dihydroxy-3-methylvalerate) into 2-oxo-3-methylpentanoate (2-oxo-3-methylvalerate) and of (2R)-2,3-dihydroxy-3-methylbutanoate (2,3-dihydroxyisovalerate) into 2-oxo-3-methylbutanoate (2-oxoisovalerate), the penultimate precursor to L-isoleucine and L-valine, respectively. The protein is Dihydroxy-acid dehydratase of Desulforudis audaxviator (strain MP104C).